The following is a 318-amino-acid chain: L-carnitine dehydrogenase (318 aa).

14-19 (GAGVIG) contributes to the NAD(+) binding site.

The protein belongs to the 3-hydroxyacyl-CoA dehydrogenase family. L-carnitine dehydrogenase subfamily. Homodimer.

The protein localises to the cytoplasm. The catalysed reaction is carnitine + NAD(+) = 3-dehydrocarnitine + NADH + H(+). The protein operates within amine and polyamine metabolism; carnitine metabolism. In terms of biological role, catalyzes the NAD(+)-dependent oxidation of L-carnitine to 3-dehydrocarnitine. The polypeptide is L-carnitine dehydrogenase (Streptomyces coelicolor (strain ATCC BAA-471 / A3(2) / M145)).